We begin with the raw amino-acid sequence, 120 residues long: Large ribosomal subunit protein eL8 (120 aa).

The protein belongs to the eukaryotic ribosomal protein eL8 family. Part of the 50S ribosomal subunit. Probably part of the RNase P complex.

It is found in the cytoplasm. Functionally, multifunctional RNA-binding protein that recognizes the K-turn motif in ribosomal RNA, the RNA component of RNase P, box H/ACA, box C/D and box C'/D' sRNAs. The sequence is that of Large ribosomal subunit protein eL8 from Halorubrum lacusprofundi (strain ATCC 49239 / DSM 5036 / JCM 8891 / ACAM 34).